The primary structure comprises 352 residues: NAD(P)H oxidoreductase RTN4IP1, mitochondrial (352 aa).

In terms of domain architecture, Enoyl reductase (ER) spans 11–348 (ESLDLLEYKT…NSNSNGKIII (338 aa)). Val-165, Tyr-206, Ala-296, and Phe-298 together coordinate NADPH.

Belongs to the zinc-containing alcohol dehydrogenase family. Quinone oxidoreductase subfamily.

Its subcellular location is the mitochondrion matrix. The enzyme catalyses a quinone + NADH + H(+) = a quinol + NAD(+). It carries out the reaction a quinone + NADPH + H(+) = a quinol + NADP(+). It participates in cofactor biosynthesis; ubiquinone biosynthesis. In terms of biological role, NAD(P)H oxidoreductase involved in the ubiquinone biosynthetic pathway. Required for the O-methyltransferase activity of coq3. This is NAD(P)H oxidoreductase RTN4IP1, mitochondrial (rtn4ip1) from Dictyostelium discoideum (Social amoeba).